A 429-amino-acid polypeptide reads, in one-letter code: Phosphoribosylamine--glycine ligase (429 aa).

The 208-residue stretch at 109–316 folds into the ATP-grasp domain; that stretch reads KDFLARHNIP…LVELCLAACE (208 aa). Residue 135–196 coordinates ATP; the sequence is LREKGAPIVI…EEFLDGEEAS (62 aa). The interval 212–237 is disordered; the sequence is SQDHKRVGDKDTGPNTGGMGAYSPAP. Residues 213–223 show a composition bias toward basic and acidic residues; the sequence is QDHKRVGDKDT. 2 residues coordinate Mg(2+): Glu286 and Asn288.

The protein belongs to the GARS family. Monomer. It depends on Mg(2+) as a cofactor. The cofactor is Mn(2+).

The catalysed reaction is 5-phospho-beta-D-ribosylamine + glycine + ATP = N(1)-(5-phospho-beta-D-ribosyl)glycinamide + ADP + phosphate + H(+). Its pathway is purine metabolism; IMP biosynthesis via de novo pathway; N(1)-(5-phospho-D-ribosyl)glycinamide from 5-phospho-alpha-D-ribose 1-diphosphate: step 2/2. The chain is Phosphoribosylamine--glycine ligase from Escherichia coli O157:H7.